We begin with the raw amino-acid sequence, 82 residues long: UPF0291 protein PEPE_0871 (82 aa).

This sequence belongs to the UPF0291 family.

The protein resides in the cytoplasm. This chain is UPF0291 protein PEPE_0871, found in Pediococcus pentosaceus (strain ATCC 25745 / CCUG 21536 / LMG 10740 / 183-1w).